We begin with the raw amino-acid sequence, 428 residues long: Dihydroorotase (428 aa).

Zn(2+) contacts are provided by H56 and H58. Residues H58–R60 and N90 each bind substrate. Positions 150, 177, and 230 each coordinate Zn(2+). N276 is a substrate binding site. D303 lines the Zn(2+) pocket. D303 is an active-site residue. H307 is a binding site for substrate.

This sequence belongs to the metallo-dependent hydrolases superfamily. DHOase family. Class I DHOase subfamily. It depends on Zn(2+) as a cofactor.

The enzyme catalyses (S)-dihydroorotate + H2O = N-carbamoyl-L-aspartate + H(+). The protein operates within pyrimidine metabolism; UMP biosynthesis via de novo pathway; (S)-dihydroorotate from bicarbonate: step 3/3. Catalyzes the reversible cyclization of carbamoyl aspartate to dihydroorotate. The chain is Dihydroorotase from Streptomyces coelicolor (strain ATCC BAA-471 / A3(2) / M145).